The sequence spans 500 residues: L-arabinose isomerase (500 aa).

Mn(2+) contacts are provided by E306, E333, H349, and H448.

Belongs to the arabinose isomerase family. Mn(2+) is required as a cofactor.

The enzyme catalyses beta-L-arabinopyranose = L-ribulose. It participates in carbohydrate degradation; L-arabinose degradation via L-ribulose; D-xylulose 5-phosphate from L-arabinose (bacterial route): step 1/3. In terms of biological role, catalyzes the conversion of L-arabinose to L-ribulose. This is L-arabinose isomerase from Shewanella sp. (strain MR-7).